The following is a 613-amino-acid chain: Dihydroxy-acid dehydratase (613 aa).

Position 81 (aspartate 81) interacts with Mg(2+). Cysteine 122 lines the [2Fe-2S] cluster pocket. Residues aspartate 123 and lysine 124 each contribute to the Mg(2+) site. An N6-carboxylysine modification is found at lysine 124. Cysteine 193 is a binding site for [2Fe-2S] cluster. Residue glutamate 489 coordinates Mg(2+). Serine 515 functions as the Proton acceptor in the catalytic mechanism.

The protein belongs to the IlvD/Edd family. As to quaternary structure, homodimer. The cofactor is [2Fe-2S] cluster. Mg(2+) serves as cofactor.

It carries out the reaction (2R)-2,3-dihydroxy-3-methylbutanoate = 3-methyl-2-oxobutanoate + H2O. The enzyme catalyses (2R,3R)-2,3-dihydroxy-3-methylpentanoate = (S)-3-methyl-2-oxopentanoate + H2O. It functions in the pathway amino-acid biosynthesis; L-isoleucine biosynthesis; L-isoleucine from 2-oxobutanoate: step 3/4. The protein operates within amino-acid biosynthesis; L-valine biosynthesis; L-valine from pyruvate: step 3/4. In terms of biological role, functions in the biosynthesis of branched-chain amino acids. Catalyzes the dehydration of (2R,3R)-2,3-dihydroxy-3-methylpentanoate (2,3-dihydroxy-3-methylvalerate) into 2-oxo-3-methylpentanoate (2-oxo-3-methylvalerate) and of (2R)-2,3-dihydroxy-3-methylbutanoate (2,3-dihydroxyisovalerate) into 2-oxo-3-methylbutanoate (2-oxoisovalerate), the penultimate precursor to L-isoleucine and L-valine, respectively. This Pseudomonas putida (strain GB-1) protein is Dihydroxy-acid dehydratase.